The sequence spans 235 residues: Serine protease SplA (235 aa).

Positions 1 to 35 (MNENVMVKGLTALTILTSLGFAENISNQPHSIAKA) are cleaved as a signal peptide. Active-site charge relay system residues include histidine 74, aspartate 113, and serine 189.

This sequence belongs to the peptidase S1B family.

The protein resides in the secreted. The protein is Serine protease SplA (splA) of Staphylococcus aureus (strain MSSA476).